We begin with the raw amino-acid sequence, 88 residues long: Selenoprotein W (88 aa).

A cross-link (cysteinyl-selenocysteine (Cys-Sec); redox-active) is located at residues 10–13 (CGAU). U13 is a non-standard amino acid (selenocysteine). C37 is modified (S-glutathionyl cysteine).

It belongs to the SelWTH family. Selenoprotein W subfamily. As to quaternary structure, interacts with DPYSL2, PRDX1, YWHAB, YWHAG, HSP70 and HSP90. In terms of tissue distribution, in the embryo, expressed in the developing nervous system and in mesoderm-derived tissues such as heart and limbs. In the adult, predominantly expressed in brain, skeletal muscle and heart.

Its subcellular location is the cytoplasm. Functionally, plays a role as a glutathione (GSH)-dependent antioxidant. May be involved in a redox-related process. May play a role in the myopathies of selenium deficiency. This is Selenoprotein W from Mus musculus (Mouse).